Reading from the N-terminus, the 396-residue chain is Adenylyltransferase and sulfurtransferase UBA4 (396 aa).

Residues glycine 51, aspartate 72, 79 to 83, lysine 95, and 139 to 140 each bind ATP; these read SNLHR and DG. The Zn(2+) site is built by cysteine 180 and cysteine 183. Residue cysteine 197 is the Glycyl thioester intermediate; for adenylyltransferase activity of the active site. The Zn(2+) site is built by cysteine 257 and cysteine 260. One can recognise a Rhodanese domain in the interval 305–394; that stretch reads VSTKHILLDV…WAKNVDEKFP (90 aa). Catalysis depends on cysteine 355, which acts as the Cysteine persulfide intermediate; for sulfurtransferase activity.

In the N-terminal section; belongs to the HesA/MoeB/ThiF family. UBA4 subfamily. The cofactor is Zn(2+).

Its subcellular location is the cytoplasm. It localises to the cytosol. It participates in tRNA modification; 5-methoxycarbonylmethyl-2-thiouridine-tRNA biosynthesis. Its function is as follows. Plays a central role in 2-thiolation of mcm(5)S(2)U at tRNA wobble positions of cytosolic tRNA(Lys), tRNA(Glu) and tRNA(Gln). Acts by mediating the C-terminal thiocarboxylation of sulfur carrier URM1. Its N-terminus first activates URM1 as acyl-adenylate (-COAMP), then the persulfide sulfur on the catalytic cysteine is transferred to URM1 to form thiocarboxylation (-COSH) of its C-terminus. The reaction probably involves hydrogen sulfide that is generated from the persulfide intermediate and that acts as a nucleophile towards URM1. Subsequently, a transient disulfide bond is formed. Does not use thiosulfate as sulfur donor; NFS1 probably acting as a sulfur donor for thiocarboxylation reactions. Prior mcm(5) tRNA modification by the elongator complex is required for 2-thiolation. May also be involved in protein urmylation. The protein is Adenylyltransferase and sulfurtransferase UBA4 of Yarrowia lipolytica (strain CLIB 122 / E 150) (Yeast).